Reading from the N-terminus, the 118-residue chain is MRSAAAALHRLPARALIFLIELYRTYVSPTRMPVCRFTPTCSEYAVTALRTRGLVVGLGLTAVRLAKCAPWHPGGWDPVPQRRPRRRDAAAADAAMSAPHACKGSPHAVVGDTNDGST.

The disordered stretch occupies residues 76–118 (WDPVPQRRPRRRDAAAADAAMSAPHACKGSPHAVVGDTNDGST). Over residues 91-101 (AADAAMSAPHA) the composition is skewed to low complexity.

This sequence belongs to the UPF0161 family.

The protein localises to the cell membrane. In terms of biological role, could be involved in insertion of integral membrane proteins into the membrane. The chain is Putative membrane protein insertion efficiency factor from Nocardia farcinica (strain IFM 10152).